The sequence spans 503 residues: Lysine--tRNA ligase (503 aa).

Residues Glu-414 and Glu-421 each coordinate Mg(2+).

It belongs to the class-II aminoacyl-tRNA synthetase family. Homodimer. Mg(2+) is required as a cofactor.

Its subcellular location is the cytoplasm. It carries out the reaction tRNA(Lys) + L-lysine + ATP = L-lysyl-tRNA(Lys) + AMP + diphosphate. In Neisseria meningitidis serogroup A / serotype 4A (strain DSM 15465 / Z2491), this protein is Lysine--tRNA ligase.